The following is a 167-amino-acid chain: tRNA-specific adenosine deaminase (167 aa).

Residues 6–117 (FSHEYWMRHA…DAKTGAAGSL (112 aa)) form the CMP/dCMP-type deaminase domain. Histidine 57 contacts Zn(2+). The active-site Proton donor is the glutamate 59. The Zn(2+) site is built by cysteine 87 and cysteine 90.

It belongs to the cytidine and deoxycytidylate deaminase family. In terms of assembly, homodimer. The cofactor is Zn(2+).

It catalyses the reaction adenosine(34) in tRNA + H2O + H(+) = inosine(34) in tRNA + NH4(+). Its function is as follows. Catalyzes the deamination of adenosine to inosine at the wobble position 34 of tRNA(Arg2). The polypeptide is tRNA-specific adenosine deaminase (Escherichia coli O157:H7).